A 290-amino-acid chain; its full sequence is D-tagatose-1,6-bisphosphate aldolase subunit KbaY (290 aa).

Asp82 (proton donor) is an active-site residue. Zn(2+) is bound by residues His83 and His180. Gly181 is a dihydroxyacetone phosphate binding site. Residue His208 coordinates Zn(2+). Dihydroxyacetone phosphate is bound by residues 209 to 211 and 230 to 233; these read GAS and NVAT.

The protein belongs to the class II fructose-bisphosphate aldolase family. TagBP aldolase KbaY subfamily. As to quaternary structure, homotetramer. Forms a complex with KbaZ. The cofactor is Zn(2+).

The catalysed reaction is D-tagatofuranose 1,6-bisphosphate = D-glyceraldehyde 3-phosphate + dihydroxyacetone phosphate. The protein operates within carbohydrate metabolism; D-tagatose 6-phosphate degradation; D-glyceraldehyde 3-phosphate and glycerone phosphate from D-tagatose 6-phosphate: step 2/2. Functionally, catalytic subunit of the tagatose-1,6-bisphosphate aldolase KbaYZ, which catalyzes the reversible aldol condensation of dihydroxyacetone phosphate (DHAP or glycerone-phosphate) with glyceraldehyde 3-phosphate (G3P) to produce tagatose 1,6-bisphosphate (TBP). Requires KbaZ subunit for full activity and stability. The polypeptide is D-tagatose-1,6-bisphosphate aldolase subunit KbaY (Citrobacter koseri (strain ATCC BAA-895 / CDC 4225-83 / SGSC4696)).